The sequence spans 159 residues: NADH-quinone oxidoreductase subunit B (159 aa).

[4Fe-4S] cluster-binding residues include cysteine 37, cysteine 38, cysteine 102, and cysteine 132.

Belongs to the complex I 20 kDa subunit family. As to quaternary structure, NDH-1 is composed of 14 different subunits. Subunits NuoB, C, D, E, F, and G constitute the peripheral sector of the complex. It depends on [4Fe-4S] cluster as a cofactor.

It localises to the cell inner membrane. The catalysed reaction is a quinone + NADH + 5 H(+)(in) = a quinol + NAD(+) + 4 H(+)(out). In terms of biological role, NDH-1 shuttles electrons from NADH, via FMN and iron-sulfur (Fe-S) centers, to quinones in the respiratory chain. Couples the redox reaction to proton translocation (for every two electrons transferred, four hydrogen ions are translocated across the cytoplasmic membrane), and thus conserves the redox energy in a proton gradient. In Polaromonas naphthalenivorans (strain CJ2), this protein is NADH-quinone oxidoreductase subunit B.